The sequence spans 1242 residues: DNA excision repair protein ERCC-6-like (1242 aa).

Residue Ser-14 is modified to Phosphoserine. The TPR 1 repeat unit spans residues 21–54 (YLRYVKEAKEATKNGDLEQALKLFNLAKDIFPNE). The region spanning 109-277 (SLYRDGRRGG…WSLFDFACQG (169 aa)) is the Helicase ATP-binding domain. 122–129 (DDMGLGKT) is a binding site for ATP. The short motif at 228 to 231 (DEAH) is the DEAH box element. Positions 466 to 626 (FLMDLLKKLR…PFRYFSKQEL (161 aa)) constitute a Helicase C-terminal domain. 2 positions are modified to phosphoserine: Ser-755 and Ser-773. The residue at position 815 (Thr-815) is a Phosphothreonine. 4 positions are modified to phosphoserine: Ser-963, Ser-989, Ser-998, and Ser-1021. Thr-1055 carries the phosphothreonine modification. Residues Ser-1061, Ser-1090, and Ser-1110 each carry the phosphoserine modification. The interval 1103-1181 (EERLDNSSEA…LSDGQLVDSP (79 aa)) is disordered. Composition is skewed to basic and acidic residues over residues 1105–1121 (RLDN…HLEE) and 1130–1140 (APEHTKEDPSR). Polar residues predominate over residues 1141-1156 (ETLSSENKSSQLSTSK). Residues Ser-1173 and Ser-1180 each carry the phosphoserine modification. The stretch at 1192-1225 (YDTLVLHGKELKECGKIQEALDCLVKALDIKSSD) is one TPR 2 repeat.

This sequence belongs to the SNF2/RAD54 helicase family. Interacts with PLK1, which phosphorylates it. Both proteins are mutually dependent on each other for correct subcellular localization. Interacts (via N-terminal TPR repeat) with BEND3 (via BEN domains 1 and 3); the interaction is direct. In terms of processing, phosphorylation by PLK1 prevents the association with chromosome arms and restricts its localization to the kinetochore-centromere region.

It localises to the chromosome. The protein localises to the centromere. Its subcellular location is the kinetochore. The catalysed reaction is ATP + H2O = ADP + phosphate + H(+). Functionally, DNA helicase that acts as a tension sensor that associates with catenated DNA which is stretched under tension until it is resolved during anaphase. Functions as ATP-dependent DNA translocase. Can promote Holliday junction branch migration (in vitro). This chain is DNA excision repair protein ERCC-6-like (ERCC6L), found in Bos taurus (Bovine).